Reading from the N-terminus, the 633-residue chain is Leucine-rich repeat and IQ domain-containing protein 3 (633 aa).

LRR repeat units lie at residues serine 51–lysine 72, lysine 73–serine 94, and asparagine 98–serine 119. The LRRCT domain maps to cysteine 132–proline 179. An IQ domain is found at histidine 215–histidine 244. The segment at serine 324–glutamate 343 is disordered. Residues lysine 325–lysine 336 show a composition bias toward basic residues. Residues isoleucine 556–tyrosine 617 are a coiled coil.

The chain is Leucine-rich repeat and IQ domain-containing protein 3 (Lrriq3) from Mus musculus (Mouse).